The following is a 190-amino-acid chain: Somatotropin (190 aa).

Position 19 (histidine 19) interacts with Zn(2+). A disulfide bond links cysteine 52 and cysteine 163. Position 172 (glutamate 172) interacts with Zn(2+). Cysteine 180 and cysteine 188 are disulfide-bonded.

This sequence belongs to the somatotropin/prolactin family.

The protein resides in the secreted. Functionally, growth hormone plays an important role in growth control and involved in the regulation of several anabolic processes. The sequence is that of Somatotropin (GH) from Crocodylus novaeguineae (Crocodile).